A 129-amino-acid chain; its full sequence is Small ribosomal subunit protein uS11 (129 aa).

It belongs to the universal ribosomal protein uS11 family. Part of the 30S ribosomal subunit. Interacts with proteins S7 and S18. Binds to IF-3.

Its function is as follows. Located on the platform of the 30S subunit, it bridges several disparate RNA helices of the 16S rRNA. Forms part of the Shine-Dalgarno cleft in the 70S ribosome. The polypeptide is Small ribosomal subunit protein uS11 (Azorhizobium caulinodans (strain ATCC 43989 / DSM 5975 / JCM 20966 / LMG 6465 / NBRC 14845 / NCIMB 13405 / ORS 571)).